We begin with the raw amino-acid sequence, 357 residues long: Cinnamyl alcohol dehydrogenase 7 (357 aa).

A Zn(2+)-binding site is contributed by Cys46. Thr48 is a binding site for NADP(+). Positions 68, 69, 99, 102, 105, 113, and 162 each coordinate Zn(2+). Residues Thr166, Gly187 to Gly192, Ser210 to Lys215, Thr250, Gly274, and Ser297 to Val299 each bind NADP(+).

Belongs to the zinc-containing alcohol dehydrogenase family. Homodimer. It depends on Zn(2+) as a cofactor. Expressed in the differentiation and elongation zones of primary and lateral roots. Expressed in the hypocotyl, cotyledon and leaf veins, hydathodes and trichomes. In stems, expressed in the vascular cambium region. Expressed in the style, anthers, stamen filaments, vascular tissues of sepals and stigmatic regions in flowers, and abscission, style and stigmatic regions of siliques and seed testa.

The enzyme catalyses (E)-cinnamyl alcohol + NADP(+) = (E)-cinnamaldehyde + NADPH + H(+). It participates in aromatic compound metabolism; phenylpropanoid biosynthesis. Its function is as follows. Involved in lignin biosynthesis. Catalyzes the final step specific for the production of lignin monomers. Catalyzes the NADPH-dependent reduction of coniferaldehyde, 5-hydroxyconiferaldehyde, sinapaldehyde, 4-coumaraldehyde and caffeyl aldehyde to their respective alcohols. This Arabidopsis thaliana (Mouse-ear cress) protein is Cinnamyl alcohol dehydrogenase 7 (CAD7).